A 1121-amino-acid polypeptide reads, in one-letter code: Transcription factor CSR2 (1121 aa).

Phosphoserine occurs at positions 23, 46, and 127. 4 disordered regions span residues Pro273–Pro342, His513–Leu532, Leu579–Met600, and Ile837–Ser860. Positions Thr276 to Ala310 are enriched in polar residues. Low complexity-rich tracts occupy residues Asn318–Ala329, Ser519–Pro529, and Asn582–Gly597. Position 327 is a phosphoserine (Ser327). The span at Ile837–Val846 shows a compositional bias: basic and acidic residues. Lys841 participates in a covalent cross-link: Glycyl lysine isopeptide (Lys-Gly) (interchain with G-Cter in ubiquitin). Residues Asn847–Ser860 show a composition bias toward polar residues. Ser987 bears the Phosphoserine mark. A compositionally biased stretch (polar residues) spans Lys999–Gly1009. Disordered regions lie at residues Lys999 to Pro1022 and Thr1075 to Ser1121. Low complexity predominate over residues Thr1084 to Asn1093.

The protein belongs to the CSR2 family. Phosphorylated by CDC28.

It localises to the cytoplasm. The protein localises to the nucleus. Transcription factor involved in the regulation of fermentation and aerobic oxidation. Acts as a repressor of CYC1, which is involved in electron flow through the mitochondria under aerobic condition. Required for pseudohyphal formation upon nitrogen starvation. May be involved in viability at stationary phase and aging. This is Transcription factor CSR2 (CSR2) from Saccharomyces cerevisiae (strain ATCC 204508 / S288c) (Baker's yeast).